Here is a 98-residue protein sequence, read N- to C-terminus: Large ribosomal subunit protein eL21 (98 aa).

Residues 1-23 (MVDRKGKGFRRKTRDKLSKHPRQ) form a disordered region. Positions 7-23 (KGFRRKTRDKLSKHPRQ) are enriched in basic residues.

The protein belongs to the eukaryotic ribosomal protein eL21 family.

The protein is Large ribosomal subunit protein eL21 of Nanoarchaeum equitans (strain Kin4-M).